The following is a 741-amino-acid chain: MRISSLLFLTFLAGIVQAQDFLAMFKPFLGGGGGGGNPFANPQAIGGLFQQFAGGNGGGFGQLLAGAMAPKPAPAAAGPRSAPAPTNEDYNTDIDVPAPKAKARAAPTPRRAQADAPPVYRQPRTKAEKIERFRNIARTFSPFVYEVNTTPAPHFDNFIWQQNAPAVTPEPFTFAPFSFPTLATVAPPAPGPGGPTLEPFLPTTASPKLLAHNTARMIREIASFSDGGRSRDQDFGAVQTLMQAFFEAVSSGNNGGAGAAAGAGTALGDAPMLQAHRDGTELGANRALTNKLFESDMVLTVKQMKAIVLAAQEARNPHGRKKRKVITGSVYRWKSVIPFRFKGGDAKWKKLIREGLGLWEKETCVRWSENGPGKDYVIFFRGSGCYSSVGRTGGSQLISIGYGCEDKGIVAHEVGHSLGFWHEQSRPDRDDYIHLRKDWIIKGTDGNFEKRSWEEIEDMGVPYDVGSVMHYGSNAFTKDWDQITIETKDSRYQGTIGQRQKLSFIDVKQVNRLYCNSVCPVALPCMHGGYPDPNNCAVCKCPDGLGGKLCGRAAKGTDHDKCGGELTATAEWQEMVYKGKRTCNWKVKSPSGGRVRLVLTELRYQCAPACKAYIEIKHNTDFQQTGFRVCCFNKTYDVISDQSEALILSNANIVDYEVSYKLQWIQDNGKALPPPKPTSTWVPGKENRPFRGVENSGGTIEKFILQAIPKIRDSHRPLESITSIVAEYGLATLLGISHNGK.

Low complexity-rich tracts occupy residues 71-85 and 97-118; these read KPAP…APAP and PAPK…DAPP. Positions 71-122 are disordered; that stretch reads KPAPAAAGPRSAPAPTNEDYNTDIDVPAPKAKARAAPTPRRAQADAPPVYRQ. One can recognise a Peptidase M12A domain in the interval 324-516; that stretch reads KVITGSVYRW…VKQVNRLYCN (193 aa). Cystine bridges form between cysteine 364-cysteine 515, cysteine 385-cysteine 404, cysteine 519-cysteine 539, cysteine 541-cysteine 550, cysteine 562-cysteine 583, and cysteine 610-cysteine 630. A Zn(2+)-binding site is contributed by histidine 412. Residue glutamate 413 is part of the active site. Histidine 416 and histidine 422 together coordinate Zn(2+). Residues 539-550 form the EGF-like domain; it reads CKCPDGLGGKLC. One can recognise a CUB domain in the interval 550-648; that stretch reads CGRAAKGTDH…ISDQSEALIL (99 aa). An N-linked (GlcNAc...) asparagine glycan is attached at asparagine 633.

Zn(2+) serves as cofactor.

Metalloprotease. The sequence is that of Zinc metalloproteinase nas-30 from Caenorhabditis elegans.